Here is a 287-residue protein sequence, read N- to C-terminus: PAK4-inhibitor INKA1 (287 aa).

Disordered regions lie at residues 22-59 and 138-157; these read GRDTGSPSMPGPLQPTSQTGPDVQPSHQLRASGALEED and SRAPVASVPPVHHPRPKSTP. A compositionally biased stretch (polar residues) spans 35 to 50; sequence QPTSQTGPDVQPSHQL. Residues 138 to 147 show a composition bias toward low complexity; sequence SRAPVASVPP. 2 inka box regions span residues 168 to 205 and 261 to 287; these read EAEDWTAALLNRGRSRQPLVLGDNCFADLVHNWMELPE and PADVSRFAALMSCRSRQPIICNDVSYL.

The protein belongs to the INKA family. In terms of assembly, interacts with PAK4.

Its subcellular location is the nucleus. The protein localises to the cytoplasm. Functionally, inhibitor of the serine/threonine-protein kinase PAK4. Acts by binding PAK4 in a substrate-like manner, inhibiting the protein kinase activity. This chain is PAK4-inhibitor INKA1, found in Homo sapiens (Human).